The primary structure comprises 66 residues: Regulator of G-protein signaling 6 (66 aa).

An RGS domain is found at Leu1–Leu66.

In terms of assembly, interacts with GNB5. Interacts with RGS7BP, leading to regulate the subcellular location of the heterodimer formed with GNB5. Interacts with GNAI1.

It localises to the cytoplasm. It is found in the cytosol. Its subcellular location is the membrane. The protein resides in the nucleus. The protein localises to the cell membrane. Its function is as follows. Regulates G protein-coupled receptor signaling cascades. Inhibits signal transduction by increasing the GTPase activity of G protein alpha subunits, thereby driving them into their inactive GDP-bound form. The RGS6/GNB5 dimer enhances GNAO1 GTPase activity. This chain is Regulator of G-protein signaling 6 (Rgs6), found in Rattus norvegicus (Rat).